We begin with the raw amino-acid sequence, 166 residues long: NAD(P)H-quinone oxidoreductase subunit I, chloroplastic (166 aa).

4Fe-4S ferredoxin-type domains are found at residues 55–84 (GRIH…VDWK) and 95–124 (LNYS…MTEE). [4Fe-4S] cluster is bound by residues C64, C67, C70, C74, C104, C107, C110, and C114.

Belongs to the complex I 23 kDa subunit family. In terms of assembly, NDH is composed of at least 16 different subunits, 5 of which are encoded in the nucleus. [4Fe-4S] cluster serves as cofactor.

The protein resides in the plastid. The protein localises to the chloroplast thylakoid membrane. It catalyses the reaction a plastoquinone + NADH + (n+1) H(+)(in) = a plastoquinol + NAD(+) + n H(+)(out). The enzyme catalyses a plastoquinone + NADPH + (n+1) H(+)(in) = a plastoquinol + NADP(+) + n H(+)(out). NDH shuttles electrons from NAD(P)H:plastoquinone, via FMN and iron-sulfur (Fe-S) centers, to quinones in the photosynthetic chain and possibly in a chloroplast respiratory chain. The immediate electron acceptor for the enzyme in this species is believed to be plastoquinone. Couples the redox reaction to proton translocation, and thus conserves the redox energy in a proton gradient. In Pericome caudata (Mountain tail-leaf), this protein is NAD(P)H-quinone oxidoreductase subunit I, chloroplastic.